A 216-amino-acid chain; its full sequence is Pyridoxine/pyridoxamine 5'-phosphate oxidase (216 aa).

Residues 63–68, 78–79, lysine 85, and glutamine 107 each bind FMN; these read RMVLMK and YS. Residue lysine 68 coordinates substrate. Residues tyrosine 125 and arginine 129 each coordinate substrate. FMN contacts are provided by residues 142-143 and tryptophan 187; that span reads QS. Position 193–195 (193–195) interacts with substrate; sequence RLH. FMN is bound at residue arginine 197.

The protein belongs to the pyridoxamine 5'-phosphate oxidase family. Homodimer. Requires FMN as cofactor.

The catalysed reaction is pyridoxamine 5'-phosphate + O2 + H2O = pyridoxal 5'-phosphate + H2O2 + NH4(+). It carries out the reaction pyridoxine 5'-phosphate + O2 = pyridoxal 5'-phosphate + H2O2. The protein operates within cofactor metabolism; pyridoxal 5'-phosphate salvage; pyridoxal 5'-phosphate from pyridoxamine 5'-phosphate: step 1/1. Its pathway is cofactor metabolism; pyridoxal 5'-phosphate salvage; pyridoxal 5'-phosphate from pyridoxine 5'-phosphate: step 1/1. Catalyzes the oxidation of either pyridoxine 5'-phosphate (PNP) or pyridoxamine 5'-phosphate (PMP) into pyridoxal 5'-phosphate (PLP). In Bradyrhizobium sp. (strain BTAi1 / ATCC BAA-1182), this protein is Pyridoxine/pyridoxamine 5'-phosphate oxidase.